A 340-amino-acid polypeptide reads, in one-letter code: Phosphate acyltransferase (340 aa).

The protein belongs to the PlsX family. Homodimer. Probably interacts with PlsY.

It is found in the cytoplasm. The catalysed reaction is a fatty acyl-[ACP] + phosphate = an acyl phosphate + holo-[ACP]. It participates in lipid metabolism; phospholipid metabolism. Its function is as follows. Catalyzes the reversible formation of acyl-phosphate (acyl-PO(4)) from acyl-[acyl-carrier-protein] (acyl-ACP). This enzyme utilizes acyl-ACP as fatty acyl donor, but not acyl-CoA. This Nostoc punctiforme (strain ATCC 29133 / PCC 73102) protein is Phosphate acyltransferase.